The sequence spans 248 residues: Phosphatidylglycerol--prolipoprotein diacylglyceryl transferase (248 aa).

The next 3 helical transmembrane spans lie at Phe6–Leu26, Ile48–Glu68, and Gly84–Cys104. Arg130 is an a 1,2-diacyl-sn-glycero-3-phospho-(1'-sn-glycerol) binding site. A run of 2 helical transmembrane segments spans residues Gly187–Leu207 and Ile214–Leu234.

This sequence belongs to the Lgt family.

The protein localises to the cell membrane. It carries out the reaction L-cysteinyl-[prolipoprotein] + a 1,2-diacyl-sn-glycero-3-phospho-(1'-sn-glycerol) = an S-1,2-diacyl-sn-glyceryl-L-cysteinyl-[prolipoprotein] + sn-glycerol 1-phosphate + H(+). It participates in protein modification; lipoprotein biosynthesis (diacylglyceryl transfer). In terms of biological role, catalyzes the transfer of the diacylglyceryl group from phosphatidylglycerol to the sulfhydryl group of the N-terminal cysteine of a prolipoprotein, the first step in the formation of mature lipoproteins. This Finegoldia magna (strain ATCC 29328 / DSM 20472 / WAL 2508) (Peptostreptococcus magnus) protein is Phosphatidylglycerol--prolipoprotein diacylglyceryl transferase.